The following is a 465-amino-acid chain: Ribulose bisphosphate carboxylase large chain (465 aa).

Lys-4 bears the N6,N6,N6-trimethyllysine mark. Substrate contacts are provided by Asn-113 and Thr-163. Lys-165 (proton acceptor) is an active-site residue. Lys-167 is a binding site for substrate. Lys-191, Asp-193, and Glu-194 together coordinate Mg(2+). Lys-191 carries the N6-carboxylysine modification. His-284 functions as the Proton acceptor in the catalytic mechanism. Positions 285, 317, and 369 each coordinate substrate.

Belongs to the RuBisCO large chain family. Type I subfamily. In terms of assembly, heterohexadecamer of 8 large chains and 8 small chains; disulfide-linked. The disulfide link is formed within the large subunit homodimers. It depends on Mg(2+) as a cofactor. In terms of processing, the disulfide bond which can form in the large chain dimeric partners within the hexadecamer appears to be associated with oxidative stress and protein turnover.

The protein resides in the plastid. Its subcellular location is the chloroplast. It carries out the reaction 2 (2R)-3-phosphoglycerate + 2 H(+) = D-ribulose 1,5-bisphosphate + CO2 + H2O. The catalysed reaction is D-ribulose 1,5-bisphosphate + O2 = 2-phosphoglycolate + (2R)-3-phosphoglycerate + 2 H(+). Functionally, ruBisCO catalyzes two reactions: the carboxylation of D-ribulose 1,5-bisphosphate, the primary event in carbon dioxide fixation, as well as the oxidative fragmentation of the pentose substrate in the photorespiration process. Both reactions occur simultaneously and in competition at the same active site. The polypeptide is Ribulose bisphosphate carboxylase large chain (Idesia polycarpa (Iigiri tree)).